Reading from the N-terminus, the 136-residue chain is ATP synthase epsilon chain, chloroplastic (136 aa).

This sequence belongs to the ATPase epsilon chain family. F-type ATPases have 2 components, CF(1) - the catalytic core - and CF(0) - the membrane proton channel. CF(1) has five subunits: alpha(3), beta(3), gamma(1), delta(1), epsilon(1). CF(0) has three main subunits: a, b and c.

It is found in the plastid. It localises to the chloroplast thylakoid membrane. In terms of biological role, produces ATP from ADP in the presence of a proton gradient across the membrane. In Tetradesmus obliquus (Green alga), this protein is ATP synthase epsilon chain, chloroplastic.